The primary structure comprises 295 residues: Protease HtpX homolog (295 aa).

2 consecutive transmembrane segments (helical) span residues 6–26 and 40–60; these read IGLFLLTNILVVVTISIVTSV and LSSLLVFCFLWGMGGAFVSLL. Histidine 148 provides a ligand contact to Zn(2+). Glutamate 149 is a catalytic residue. Histidine 152 provides a ligand contact to Zn(2+). A run of 2 helical transmembrane segments spans residues 163–183 and 198–218; these read LIQGVVNAFVMFFSRIISYAL and IANIVLSILFSILGSIIVAYF. Glutamate 223 serves as a coordination point for Zn(2+).

This sequence belongs to the peptidase M48B family. Requires Zn(2+) as cofactor.

The protein localises to the cell inner membrane. This chain is Protease HtpX homolog, found in Leptospira interrogans serogroup Icterohaemorrhagiae serovar copenhageni (strain Fiocruz L1-130).